The sequence spans 352 residues: Phenylalanine--tRNA ligase alpha subunit (352 aa).

E258 serves as a coordination point for Mg(2+).

It belongs to the class-II aminoacyl-tRNA synthetase family. Phe-tRNA synthetase alpha subunit type 1 subfamily. Tetramer of two alpha and two beta subunits. The cofactor is Mg(2+).

It is found in the cytoplasm. It carries out the reaction tRNA(Phe) + L-phenylalanine + ATP = L-phenylalanyl-tRNA(Phe) + AMP + diphosphate + H(+). This Staphylococcus aureus (strain bovine RF122 / ET3-1) protein is Phenylalanine--tRNA ligase alpha subunit.